Reading from the N-terminus, the 211-residue chain is Tudor-interacting repair regulator protein (211 aa).

Residues K10 and K151 each participate in a glycyl lysine isopeptide (Lys-Gly) (interchain with G-Cter in ubiquitin) cross-link. The segment at 118 to 205 is interaction with PXN; the sequence is TLEQLHAVEI…TEKQKKALEK (88 aa).

Belongs to the Nudix hydrolase family. TIRR subfamily. Homodimer. Interacts with TP53BP1 (via the Tudor-like domain); interaction is abolished following DNA damage and TP53BP1 phosphorylation by ATM. Interacts (via the cytoplasmic part) with SDC4. Interacts with TGFB1I1 and PXN.

The protein localises to the nucleus. Functionally, key regulator of TP53BP1 required to stabilize TP53BP1 and regulate its recruitment to chromatin. In absence of DNA damage, interacts with the tandem Tudor-like domain of TP53BP1, masking the region that binds histone H4 dimethylated at 'Lys-20' (H4K20me2), thereby preventing TP53BP1 recruitment to chromatin and maintaining TP53BP1 localization to the nucleus. Following DNA damage, ATM-induced phosphorylation of TP53BP1 and subsequent recruitment of RIF1 leads to dissociate NUDT16L1/TIRR from TP53BP1, unmasking the tandem Tudor-like domain and allowing recruitment of TP53BP1 to DNA double strand breaks (DSBs). Binds U8 snoRNA. The chain is Tudor-interacting repair regulator protein from Mus musculus (Mouse).